The chain runs to 208 residues: Crossover junction endodeoxyribonuclease RuvC (208 aa).

Residues aspartate 9, glutamate 70, and aspartate 143 contribute to the active site. Mg(2+) is bound by residues aspartate 9, glutamate 70, and aspartate 143.

This sequence belongs to the RuvC family. As to quaternary structure, homodimer which binds Holliday junction (HJ) DNA. The HJ becomes 2-fold symmetrical on binding to RuvC with unstacked arms; it has a different conformation from HJ DNA in complex with RuvA. In the full resolvosome a probable DNA-RuvA(4)-RuvB(12)-RuvC(2) complex forms which resolves the HJ. Mg(2+) serves as cofactor.

The protein localises to the cytoplasm. The enzyme catalyses Endonucleolytic cleavage at a junction such as a reciprocal single-stranded crossover between two homologous DNA duplexes (Holliday junction).. Functionally, the RuvA-RuvB-RuvC complex processes Holliday junction (HJ) DNA during genetic recombination and DNA repair. Endonuclease that resolves HJ intermediates. Cleaves cruciform DNA by making single-stranded nicks across the HJ at symmetrical positions within the homologous arms, yielding a 5'-phosphate and a 3'-hydroxyl group; requires a central core of homology in the junction. The consensus cleavage sequence is 5'-(A/T)TT(C/G)-3'. Cleavage occurs on the 3'-side of the TT dinucleotide at the point of strand exchange. HJ branch migration catalyzed by RuvA-RuvB allows RuvC to scan DNA until it finds its consensus sequence, where it cleaves and resolves the cruciform DNA. This Leifsonia xyli subsp. xyli (strain CTCB07) protein is Crossover junction endodeoxyribonuclease RuvC.